We begin with the raw amino-acid sequence, 373 residues long: Coiled-coil domain-containing protein 34 (373 aa).

2 disordered regions span residues 1–112 (MWAA…SLRG) and 118–137 (CAST…QVRL). A Phosphoserine modification is found at S52. A compositionally biased stretch (polar residues) spans 61-76 (NSTRSLLSPLGHQSFQ). Positions 77 to 101 (FDEDDGDGEDEEDVDDEEDVDEDAH) are enriched in acidic residues. Residues 152 to 286 (KEKEERDRLQ…QEWLENAKHK (135 aa)) adopt a coiled-coil conformation. The tract at residues 324 to 352 (IHMPPPKEAKDLSGRKSKRPVISQPHKSS) is disordered. Residues 328–337 (PPKEAKDLSG) show a composition bias toward basic and acidic residues.

As to expression, expressed in sperm.

It is found in the cell projection. The protein resides in the cilium. The protein localises to the flagellum. Its function is as follows. Involved in spermatogenesis. Has a probable role in anterograde intraflagellar transport which is essential for the formation of sperm flagella. This is Coiled-coil domain-containing protein 34 (CCDC34) from Homo sapiens (Human).